A 1588-amino-acid chain; its full sequence is Paternally-expressed gene 3 protein (1588 aa).

One can recognise an SCAN box domain in the interval 46-128 (HQRFRNLIYV…TLLENYKEMY (83 aa)). Disordered regions lie at residues 128-231 (YQPE…YQNV), 265-304 (GHSH…RRGI), and 317-347 (KFIK…MSDD). Residues 129–142 (QPEDDNNSDVTSDD) are compositionally biased toward acidic residues. Basic and acidic residues-rich tracts occupy residues 143–152 (DMTRNRRESS), 160–181 (FSDR…DRWS), 205–224 (FEMD…RSQD), and 293–304 (PEAKKSTHRRGI). 3 C2H2-type zinc fingers span residues 452–474 (YVCD…QIMH), 505–527 (FECK…RKIH), and 563–585 (YECR…QKIH). The span at 588 to 607 (DDKDNEREHERERERERGET) shows a compositional bias: basic and acidic residues. The disordered stretch occupies residues 588 to 608 (DDKDNEREHERERERERGETF). The C2H2-type 4 zinc-finger motif lies at 627 to 649 (YECKVCGETFLHSSSLKEHQKIH). Disordered stretches follow at residues 839-889 (VASK…SKNR) and 905-929 (QKSV…SSNV). Positions 868–881 (LNDKRQKIPARENP) are enriched in basic and acidic residues. The C2H2-type 5 zinc-finger motif lies at 969 to 991 (YECQECGECFAHSSDLTEHQKIH). The disordered stretch occupies residues 1056–1104 (EKSHGEESQGENTDGEETHSEETHGQETIEDPVIQGSDMEDPQKDDPDD). The segment covering 1071–1082 (EETHSEETHGQE) has biased composition (basic and acidic residues). C2H2-type zinc fingers lie at residues 1107–1129 (YECE…QKVH), 1163–1185 (YECP…QRIH), 1225–1247 (IRCL…MRLH), 1282–1304 (FECA…VTVH), and 1332–1354 (YECK…KELH). Residues 1396 to 1415 (EPEVEAAEPEVEAAEPEVEA) are compositionally biased toward acidic residues. Residues 1396–1495 (EPEVEAAEPE…GIEDPEEGED (100 aa)) form a disordered region. Repeat copies occupy residues 1397 to 1403 (PEVEAAE), 1404 to 1410 (PEVEAAE), 1411 to 1417 (PEVEAAE), 1418 to 1422 (PNGEA), 1425 to 1429 (PDGEA), 1432 to 1436 (PIGEA), and 1439 to 1443 (PNGEA). The tract at residues 1397-1417 (PEVEAAEPEVEAAEPEVEAAE) is 3 X 7 AA repeat of P-E-V-E-A-A-E. Residues 1418-1443 (PNGEAEGPDGEAAEPIGEAGQPNGEA) are 4 X 5 AA repeat of P-X-G-E-A. Acidic residues-rich tracts occupy residues 1449-1466 (DADE…ERAE) and 1475-1495 (PEGD…EGED). 2 consecutive C2H2-type zinc fingers follow at residues 1505–1527 (YDCH…LKTH) and 1564–1586 (FKCD…QNTH).

It belongs to the krueppel C2H2-type zinc-finger protein family. In terms of assembly, homodimer. Interacts with SIAH1A and SIAH2. Interacts with TRAF2. As to expression, brain, glial cells, astrocytes, embryo, placenta, testis, ovary and uterus. In the placenta it is found in the layer of villous cytotrophoblast cells while in the ovary it is found in the cells of the ovarian stroma including the thecal layers around the follicles. Expression is highly repressed in glioma cell lines.

The protein resides in the nucleus. It is found in the cytoplasm. Functionally, induces apoptosis in cooperation with SIAH1A. Acts as a mediator between p53/TP53 and BAX in a neuronal death pathway that is activated by DNA damage. Acts synergistically with TRAF2 and inhibits TNF induced apoptosis through activation of NF-kappa-B. Possesses a tumor suppressing activity in glioma cells. The chain is Paternally-expressed gene 3 protein (PEG3) from Homo sapiens (Human).